A 278-amino-acid polypeptide reads, in one-letter code: Transcription initiation factor TFIID subunit 9 (278 aa).

Residues Thr193–Asn278 are disordered. The segment covering Ser200–Gln210 has biased composition (gly residues). Positions Ala231 to Ala240 are enriched in low complexity. The segment covering Ser241–Gly259 has biased composition (gly residues). The span at Glu269–Asn278 shows a compositional bias: acidic residues.

Belongs to the TAF9 family. As to quaternary structure, belongs to the TFIID complex which is composed of TATA binding protein (Tbp) and a number of TBP-associated factors (TAFs). Taf9 and Taf6 exist as a heterotetramer. Interacts with e(y)2.

It is found in the nucleus. In terms of biological role, TFIID is a multimeric protein complex that plays a central role in mediating promoter responses to various activators and repressors. This is Transcription initiation factor TFIID subunit 9 from Drosophila melanogaster (Fruit fly).